Here is a 301-residue protein sequence, read N- to C-terminus: Probable alpha-L-glutamate ligase (301 aa).

An ATP-grasp domain is found at 104-287 (LQFLSRKGID…IAGMIIEFIE (184 aa)). ATP-binding positions include Lys141, 178-179 (EF), Asp187, and 211-213 (RSN). The Mg(2+) site is built by Asp248, Glu260, and Asn262. Positions 248, 260, and 262 each coordinate Mn(2+).

Belongs to the RimK family. Requires Mg(2+) as cofactor. Mn(2+) is required as a cofactor.

The polypeptide is Probable alpha-L-glutamate ligase (Coxiella burnetii (strain CbuK_Q154) (Coxiella burnetii (strain Q154))).